The following is a 961-amino-acid chain: ATPase 7, plasma membrane-type (961 aa).

The Cytoplasmic segment spans residues 1–64 (MTDIEALKAI…EKKESKILKF (64 aa)). A helical membrane pass occupies residues 65-84 (LGFMWNPLSWVMEAAALMAI). Topologically, residues 85–96 (GLAHGGGKPADY) are extracellular. A helical membrane pass occupies residues 97–117 (HDFVGIVVLLLINSTISFVEE). Over 118-246 (NNAGNAAAAL…GHFQKVLTAI (129 aa)) the chain is Cytoplasmic. A helical membrane pass occupies residues 247-267 (GNFCICSIAVGMAIEIVVIYG). The Extracellular portion of the chain corresponds to 268 to 276 (LQKRGYRVG). A helical membrane pass occupies residues 277-294 (IDNLLVLLIGGIPIAMPT). The Cytoplasmic segment spans residues 295 to 643 (VLSVTMAIGA…TSRAIFQRMK (349 aa)). The 4-aspartylphosphate intermediate role is filled by D332. Mg(2+)-binding residues include D588 and D592. The chain crosses the membrane as a helical span at residues 644-665 (NYTIYAVSITIRIVMGFMLLCV). Residues 666–670 (FWEFD) lie on the Extracellular side of the membrane. A helical transmembrane segment spans residues 671 to 693 (FPPFMVLVIAILNDGTIMTISKD). Residues 694–709 (RVKPSPTPDCWKLKEI) lie on the Cytoplasmic side of the membrane. Residues 710-730 (FATGVVLGAYLAIMTVVFFWA) form a helical membrane-spanning segment. Topologically, residues 731-764 (AYETNFFHNIFHVRNFNQHHFKMKDKKVAAHLNE) are extracellular. A helical transmembrane segment spans residues 765-785 (QMASAVYLQVSTISQALIFVT). The Cytoplasmic portion of the chain corresponds to 786–797 (RSRSWSFVERPG). A helical membrane pass occupies residues 798-818 (FLLVIAFLIAQLVASVISAMA). The Extracellular segment spans residues 819–826 (NWPFAGIR). A helical membrane pass occupies residues 827–847 (SIGWGWTGVIWIFNIVTYMLL). Residues 848 to 961 (DPIKFLVRYA…EDPNSNNYTI (114 aa)) lie on the Cytoplasmic side of the membrane. A Phosphothreonine modification is found at T894. Phosphoserine occurs at positions 910 and 942. The interval 959-961 (YTI) is interaction with 14-3-3 proteins. Position 960 is a phosphothreonine (T960).

This sequence belongs to the cation transport ATPase (P-type) (TC 3.A.3) family. Type IIIA subfamily. In terms of assembly, binds to 14-3-3 proteins. The binding is induced by phosphorylation of Thr-960. Binding to 14-3-3 proteins activates the H(+)-ATPase. Expressed in guard cells, roots and leaves, and barely in mesophyll cells.

It is found in the membrane. It carries out the reaction ATP + H2O + H(+)(in) = ADP + phosphate + 2 H(+)(out). The plasma membrane H(+) ATPase of plants and fungi generates a proton gradient that drives the active transport of nutrients by H(+)-symport. The resulting external acidification and/or internal alkinization may mediate growth responses. This is ATPase 7, plasma membrane-type (AHA7) from Arabidopsis thaliana (Mouse-ear cress).